A 600-amino-acid chain; its full sequence is Methionine--tRNA ligase (600 aa).

The 'HIGH' region motif lies at 12-22 (PYANGPRHIGH). Residues cysteine 144, cysteine 147, cysteine 157, and cysteine 160 each coordinate Zn(2+). The 'KMSKS' region motif lies at 351 to 355 (KFSSS). Residue serine 354 coordinates ATP.

Belongs to the class-I aminoacyl-tRNA synthetase family. MetG type 1 subfamily. In terms of assembly, monomer. Requires Zn(2+) as cofactor.

Its subcellular location is the cytoplasm. It catalyses the reaction tRNA(Met) + L-methionine + ATP = L-methionyl-tRNA(Met) + AMP + diphosphate. Its function is as follows. Is required not only for elongation of protein synthesis but also for the initiation of all mRNA translation through initiator tRNA(fMet) aminoacylation. The chain is Methionine--tRNA ligase from Chloroflexus aurantiacus (strain ATCC 29364 / DSM 637 / Y-400-fl).